Here is a 244-residue protein sequence, read N- to C-terminus: 1-(5-phosphoribosyl)-5-[(5-phosphoribosylamino)methylideneamino] imidazole-4-carboxamide isomerase (244 aa).

The active-site Proton acceptor is the Asp-10. Asp-132 (proton donor) is an active-site residue.

It belongs to the HisA/HisF family.

It is found in the cytoplasm. It carries out the reaction 1-(5-phospho-beta-D-ribosyl)-5-[(5-phospho-beta-D-ribosylamino)methylideneamino]imidazole-4-carboxamide = 5-[(5-phospho-1-deoxy-D-ribulos-1-ylimino)methylamino]-1-(5-phospho-beta-D-ribosyl)imidazole-4-carboxamide. Its pathway is amino-acid biosynthesis; L-histidine biosynthesis; L-histidine from 5-phospho-alpha-D-ribose 1-diphosphate: step 4/9. The protein is 1-(5-phosphoribosyl)-5-[(5-phosphoribosylamino)methylideneamino] imidazole-4-carboxamide isomerase of Stenotrophomonas maltophilia (strain K279a).